A 362-amino-acid polypeptide reads, in one-letter code: tRNA-specific 2-thiouridylase MnmA (362 aa).

Residues 9–16 (GMSGGVDS) and Met35 contribute to the ATP site. The segment at 95 to 97 (NPD) is interaction with target base in tRNA. Cys100 (nucleophile) is an active-site residue. Cys100 and Cys196 are oxidised to a cystine. Position 124 (Gly124) interacts with ATP. An interaction with tRNA region spans residues 146–148 (KDQ). The active-site Cysteine persulfide intermediate is the Cys196. The segment at 308 to 309 (RY) is interaction with tRNA.

Belongs to the MnmA/TRMU family.

The protein resides in the cytoplasm. The catalysed reaction is S-sulfanyl-L-cysteinyl-[protein] + uridine(34) in tRNA + AH2 + ATP = 2-thiouridine(34) in tRNA + L-cysteinyl-[protein] + A + AMP + diphosphate + H(+). Its function is as follows. Catalyzes the 2-thiolation of uridine at the wobble position (U34) of tRNA, leading to the formation of s(2)U34. The sequence is that of tRNA-specific 2-thiouridylase MnmA from Nitrosomonas europaea (strain ATCC 19718 / CIP 103999 / KCTC 2705 / NBRC 14298).